A 181-amino-acid chain; its full sequence is Large ribosomal subunit protein uL5c (181 aa).

The protein belongs to the universal ribosomal protein uL5 family. In terms of assembly, part of the 50S ribosomal subunit; contacts the 5S rRNA.

The protein resides in the plastid. The protein localises to the chloroplast. Its function is as follows. Binds 5S rRNA, forms part of the central protuberance of the 50S subunit. This is Large ribosomal subunit protein uL5c (rpl5) from Rhodomonas salina (Cryptomonas salina).